The following is a 534-amino-acid chain: Low affinity inorganic phosphate transporter 1 (534 aa).

Over 1–23 (MAKDLQVLTALDVAKTQLYHFTA) the chain is Cytoplasmic. Residues 24-44 (IVIAGMGFFTDAYDLFCISLV) traverse the membrane as a helical segment. The Extracellular segment spans residues 45–69 (TKLLGRIYYHHEGALKPGSLPPNVA). A helical membrane pass occupies residues 70 to 90 (AAVNGVAFCGTLAGQLFFGWL). Residues 91–98 (GDKLGRKK) lie on the Cytoplasmic side of the membrane. The helical transmembrane segment at 99-119 (VYGMTLMLMVICSIASGLSFG) threads the bilayer. Residues 120–124 (HTPKS) are Extracellular-facing. Residues 125–145 (VMATLCFFRFWLGFGIGGDYP) traverse the membrane as a helical segment. The Cytoplasmic portion of the chain corresponds to 146–163 (LSATIMSEYANKKTRGAF). Residues 164 to 184 (IAAVFAMQGFGILAGGMVAII) form a helical membrane-spanning segment. Over 185–210 (VSAAFKNQFPAPAYKDGALASTISQA) the chain is Extracellular. A helical transmembrane segment spans residues 211-231 (DFVWRIIVMFGAIPTALTYYW). Residues 232–290 (RMKMPETARYTALVAKNLKQATNDMSKVLQVEIEPEQEKVEEISQGNDFGLFTKQFLRR) lie on the Cytoplasmic side of the membrane. The helical transmembrane segment at 291 to 311 (HGLHLLGTASTWFLLDIAFYS) threads the bilayer. At 312–343 (QNLFQKDIFSAIGWIPPAETMNALEEVYRIAR) the chain is on the extracellular side. Residues 344-364 (AQTLIALCSTVPGYWFTVAFI) traverse the membrane as a helical segment. The Cytoplasmic portion of the chain corresponds to 365–369 (DKIGR). The chain crosses the membrane as a helical span at residues 370–390 (FAIQLMGFFFMTVFMFALAIP). Residues 391 to 400 (YTHWTHKDNR) are Extracellular-facing. The chain crosses the membrane as a helical span at residues 401–421 (IGFVIMYSLTFFFANFGPNAT). Over 422–440 (TFVVPAEIFPARLRSTCHG) the chain is Cytoplasmic. Residues 441-461 (ISAAAGKAGAMVGAFGFLYAA) traverse the membrane as a helical segment. Topologically, residues 462–481 (QSTDPKKTDAGYPAGIGVRN) are extracellular. A helical transmembrane segment spans residues 482 to 502 (SLIVLGCVNFLGMLFTLLVPE). Over 503-534 (SKGKSLEEMSRENEGEDENGTEMRASGRTVPV) the chain is Cytoplasmic. Residues 507–534 (SLEEMSRENEGEDENGTEMRASGRTVPV) form a disordered region.

Belongs to the major facilitator superfamily. Phosphate:H(+) symporter (TC 2.A.1.9) family.

Its subcellular location is the cell membrane. The catalysed reaction is phosphate(in) + H(+)(in) = phosphate(out) + H(+)(out). In terms of biological role, low-affinity transporter for external inorganic phosphate (Pi). Involved in phosphorus (P) remobilization from dying to developing tissues during corolla senescence in an ethylene-dependent manner. The sequence is that of Low affinity inorganic phosphate transporter 1 from Petunia hybrida (Petunia).